The chain runs to 323 residues: Serine/threonine-protein phosphatase PP1 (323 aa).

Mn(2+)-binding residues include Asp-63, His-65, Asp-91, and Asn-123. Catalysis depends on His-124, which acts as the Proton donor. 2 residues coordinate Mn(2+): His-172 and His-247.

Belongs to the PPP phosphatase family. PP-1 subfamily. The cofactor is Mn(2+).

The enzyme catalyses O-phospho-L-seryl-[protein] + H2O = L-seryl-[protein] + phosphate. It catalyses the reaction O-phospho-L-threonyl-[protein] + H2O = L-threonyl-[protein] + phosphate. Functionally, plays an important role in the control of mitosis by reversing the action of the nimA kinase. This chain is Serine/threonine-protein phosphatase PP1 (bimG), found in Emericella nidulans (strain FGSC A4 / ATCC 38163 / CBS 112.46 / NRRL 194 / M139) (Aspergillus nidulans).